The sequence spans 132 residues: ATP synthase epsilon chain (132 aa).

Belongs to the ATPase epsilon chain family. F-type ATPases have 2 components, CF(1) - the catalytic core - and CF(0) - the membrane proton channel. CF(1) has five subunits: alpha(3), beta(3), gamma(1), delta(1), epsilon(1). CF(0) has three main subunits: a, b and c.

It localises to the cell inner membrane. Produces ATP from ADP in the presence of a proton gradient across the membrane. This Anaeromyxobacter sp. (strain Fw109-5) protein is ATP synthase epsilon chain.